The sequence spans 407 residues: Carbamoyl phosphate synthase small chain (407 aa).

The tract at residues 1 to 205 (MTETTPKTAP…LQDGYGEQDA (205 aa)) is CPSase. 3 residues coordinate L-glutamine: Ser60, Gly257, and Gly259. The Glutamine amidotransferase type-1 domain maps to 209–397 (HVVALDFGVK…INLIRERKGQ (189 aa)). The Nucleophile role is filled by Cys286. Leu287, Gln290, Asn328, Gly330, and Phe331 together coordinate L-glutamine. Catalysis depends on residues His370 and Glu372.

The protein belongs to the CarA family. In terms of assembly, composed of two chains; the small (or glutamine) chain promotes the hydrolysis of glutamine to ammonia, which is used by the large (or ammonia) chain to synthesize carbamoyl phosphate. Tetramer of heterodimers (alpha,beta)4.

The enzyme catalyses hydrogencarbonate + L-glutamine + 2 ATP + H2O = carbamoyl phosphate + L-glutamate + 2 ADP + phosphate + 2 H(+). It catalyses the reaction L-glutamine + H2O = L-glutamate + NH4(+). The protein operates within amino-acid biosynthesis; L-arginine biosynthesis; carbamoyl phosphate from bicarbonate: step 1/1. It participates in pyrimidine metabolism; UMP biosynthesis via de novo pathway; (S)-dihydroorotate from bicarbonate: step 1/3. Small subunit of the glutamine-dependent carbamoyl phosphate synthetase (CPSase). CPSase catalyzes the formation of carbamoyl phosphate from the ammonia moiety of glutamine, carbonate, and phosphate donated by ATP, constituting the first step of 2 biosynthetic pathways, one leading to arginine and/or urea and the other to pyrimidine nucleotides. The small subunit (glutamine amidotransferase) binds and cleaves glutamine to supply the large subunit with the substrate ammonia. In Brucella suis (strain ATCC 23445 / NCTC 10510), this protein is Carbamoyl phosphate synthase small chain.